The following is a 941-amino-acid chain: Isoleucine--tRNA ligase (941 aa).

Positions 59–69 (PYANGNIHIGH) match the 'HIGH' region motif. Glu-562 is an L-isoleucyl-5'-AMP binding site. Positions 603-607 (KMSKS) match the 'KMSKS' region motif. Lys-606 provides a ligand contact to ATP. Positions 904, 907, 924, and 927 each coordinate Zn(2+).

It belongs to the class-I aminoacyl-tRNA synthetase family. IleS type 1 subfamily. Monomer. Zn(2+) is required as a cofactor.

The protein localises to the cytoplasm. The enzyme catalyses tRNA(Ile) + L-isoleucine + ATP = L-isoleucyl-tRNA(Ile) + AMP + diphosphate. Catalyzes the attachment of isoleucine to tRNA(Ile). As IleRS can inadvertently accommodate and process structurally similar amino acids such as valine, to avoid such errors it has two additional distinct tRNA(Ile)-dependent editing activities. One activity is designated as 'pretransfer' editing and involves the hydrolysis of activated Val-AMP. The other activity is designated 'posttransfer' editing and involves deacylation of mischarged Val-tRNA(Ile). This Haemophilus influenzae (strain PittGG) protein is Isoleucine--tRNA ligase.